We begin with the raw amino-acid sequence, 1823 residues long: MALSSAWRSVLPLWLLWSAACSRAASGDDNAFPFDIEGSSAVGRQDPPETSEPRVALGRLPPAAEKCNAGFFHTLSGECVPCDCNGNSNECLDGSGYCVHCQRNTTGEHCEKCLDGYIGDSIRGAPQFCQPCPCPLPHLANFAESCYRKNGAVRCICNENYAGPNCERCAPGYYGNPLLIGSTCKKCDCSGNSDPNLIFEDCDEVTGQCRNCLRNTTGFKCERCAPGYYGDARIAKNCAVCNCGGGPCDSVTGECLEEGFEPPTGMDCPTISCDKCVWDLTDDLRLAALSIEEGKSGVLSVSSGAAAHRHVNEINATIYLLKTKLSERENQYALRKIQINNAENTMKSLLSDVEELVEKENQASRKGQLVQKESMDTINHASQLVEQAHDMRDKIQEINNKMLYYGEEHELSPKEISEKLVLAQKMLEEIRSRQPFFTQRELVDEEADEAYELLSQAESWQRLHNETRTLFPVVLEQLDDYNAKLSDLQEALDQALNYVRDAEDMNRATAARQRDHEKQQERVREQMEVVNMSLSTSADSLTTPRLTLSELDDIIKNASGIYAEIDGAKSELQVKLSNLSNLSHDLVQEAIDHAQDLQQEANELSRKLHSSDMNGLVQKALDASNVYENIVNYVSEANETAEFALNTTDRIYDAVSGIDTQIIYHKDESENLLNQARELQAKAESSSDEAVADTSRRVGGALARKSALKTRLSDAVKQLQAAERGDAQQRLGQSRLITEEANRTTMEVQQATAPMANNLTNWSQNLQHFDSSAYNTAVNSARDAVRNLTEVVPQLLDQLRTVEQKRPASNVSASIQRIRELIAQTRSVASKIQVSMMFDGQSAVEVHSRTSMDDLKAFTSLSLYMKPPVKRPELTETADQFILYLGSKNAKKEYMGLAIKNDNLVYVYNLGTKDVEIPLDSKPVSSWPAYFSIVKIERVGKHGKVFLTVPSLSSTAEEKFIKKGEFSGDDSLLDLDPEDTVFYVGGVPSNFKLPTSLNLPGFVGCLELATLNNDVISLYNFKHIYNMDPSTSVPCARDKLAFTQSRAASYFFDGSGYAVVRDITRRGKFGQVTRFDIEVRTPADNGLILLMVNGSMFFRLEMRNGYLHVFYDFGFSGGPVHLEDTLKKAQINDAKYHEISIIYHNDKKMILVVDRRHVKSMDNEKMKIPFTDIYIGGAPPEILQSRALRAHLPLDINFRGCMKGFQFQKKDFNLLEQTETLGVGYGCPEDSLISRRAYFNGQSFIASIQKISFFDGFEGGFNFRTLQPNGLLFYYASGSDVFSISLDNGTVIMDVKGIKVQSVDKQYNDGLSHFVISSVSPTRYELIVDKSRVGSKNPTKGKIEQTQASEKKFYFGGSPISAQYANFTGCISNAYFTRVDRDVEVEDFQRYTEKVHTSLYECPIESSPLFLLHKKGKNLSKPKASQNKKGGKSKDAPSWDPVALKLPERNTPRNSHCHLSNSPRAIEHAYQYGGTANSRQEFEHLKGDFGAKSQFSIRLRTRSSHGMIFYVSDQEENDFMTLFLAHGRLVYMFNVGHKKLKIRSQEKYNDGLWHDVIFIRERSSGRLVIDGLRVLEESLPPTEATWKIKGPIYLGGVAPGKAVKNVQINSIYSFSGCLSNLQLNGASITSASQTFSVTPCFEGPMETGTYFSTEGGYVVLDESFNIGLKFEIAFEVRPRSSSGTLVHGHSVNGEYLNVHMKNGQVIVKVNNGIRDFSTSVTPKQSLCDGRWHRITVIRDSNVVQLDVDSEVNHVVGPLNPKPIDHREPVFVGGVPESLLTPRLAPSKPFTGCIRHFVIDGHPVSFSKAALVSGAVSINSCPAA.

Residues 1–24 (MALSSAWRSVLPLWLLWSAACSRA) form the signal peptide. Ser39 is a glycosylation site (O-linked (Xyl...) (chondroitin sulfate) serine). Cystine bridges form between Cys82–Cys91, Cys84–Cys98, Cys101–Cys110, Cys113–Cys129, Cys132–Cys146, Cys134–Cys155, Cys157–Cys166, Cys169–Cys184, Cys187–Cys202, Cys189–Cys209, Cys212–Cys221, and Cys224–Cys238. 3 consecutive Laminin EGF-like domains span residues 82 to 131 (CDCN…FCQP), 132 to 186 (CPCP…TCKK), and 187 to 240 (CDCS…NCAV). Residue Asn104 is glycosylated (N-linked (GlcNAc...) asparagine). N-linked (GlcNAc...) asparagine glycosylation is present at Asn215. A Laminin EGF-like 4; truncated domain is found at 241–255 (CNCGGGPCDSVTGEC). The interval 256–832 (LEEGFEPPTG…AQTRSVASKI (577 aa)) is domain II and I. Asn315 is a glycosylation site (N-linked (GlcNAc...) asparagine). Residues 320 to 403 (LLKTKLSERE…KIQEINNKML (84 aa)) are a coiled coil. A glycan (N-linked (GlcNAc...) asparagine) is linked at Asn465. Residues 473-528 (VVLEQLDDYNAKLSDLQEALDQALNYVRDAEDMNRATAARQRDHEKQQERVREQME) adopt a coiled-coil conformation. Residues Asn531, Asn557, Asn578, Asn581, Asn638, and Asn646 are each glycosylated (N-linked (GlcNAc...) asparagine). Positions 581 to 614 (NLSHDLVQEAIDHAQDLQQEANELSRKLHSSDMN) form a coiled coil. A coiled-coil region spans residues 662-724 (IIYHKDESEN…AVKQLQAAER (63 aa)). A Cell attachment site motif is present at residues 724 to 726 (RGD). Residues Asn742, Asn758, Asn761, Asn787, and Asn810 are each glycosylated (N-linked (GlcNAc...) asparagine). The stretch at 777–806 (AVNSARDAVRNLTEVVPQLLDQLRTVEQKR) forms a coiled coil. Laminin G-like domains are found at residues 833–1035 (QVSM…SVPC), 1047–1227 (AASY…GYGC), and 1234–1402 (SRRA…LYEC). A disulfide bridge links Cys1005 with Cys1035. N-linked (GlcNAc...) asparagine glycosylation occurs at Asn1093. Cys1201 and Cys1227 are disulfide-bonded. 2 N-linked (GlcNAc...) asparagine glycosylation sites follow: Asn1288 and Asn1366. A disulfide bridge links Cys1370 with Cys1402. N-linked (GlcNAc...) asparagine glycosylation is present at Asn1418. Positions 1419–1440 (LSKPKASQNKKGGKSKDAPSWD) are disordered. 2 consecutive Laminin G-like domains span residues 1469-1640 (AYQY…VTPC) and 1647-1820 (TGTY…INSC). Disulfide bonds link Cys1617/Cys1640 and Cys1792/Cys1820.

In terms of assembly, laminin is a complex glycoprotein, consisting of three different polypeptide chains (alpha, beta, gamma), which are bound to each other by disulfide bonds into a cross-shaped molecule comprising one long and three short arms with globules at each end. Alpha-4 is a subunit of laminin-8 (laminin-411), laminin-9 (laminin-421) and laminin-14 (laminin-423). As to expression, detected in placenta (at protein level). Detected in fibroblasts and urine (at protein level). In adult, strong expression in heart, lung, ovary small and large intestines, placenta, liver; weak or no expression in skeletal muscle, kidney, pancreas, testis, prostate, brain. High expression in fetal lung and kidney. Expression in fetal and newborn tissues is observed in certain mesenchymal cells in tissues such as smooth muscle and dermis.

The protein resides in the secreted. Its subcellular location is the extracellular space. It is found in the extracellular matrix. The protein localises to the basement membrane. Its function is as follows. Binding to cells via a high affinity receptor, laminin is thought to mediate the attachment, migration and organization of cells into tissues during embryonic development by interacting with other extracellular matrix components. The protein is Laminin subunit alpha-4 (LAMA4) of Homo sapiens (Human).